A 123-amino-acid chain; its full sequence is Fluoride-specific ion channel FluC (123 aa).

4 helical membrane-spanning segments follow: residues 4 to 24 (VYIAIFGALGCLSRFMVSGWV), 31 to 51 (ALPYGTLAVNVIGSLLLGLLM), 64 to 83 (IRMGITTGFMGGFTTFSTFS), and 100 to 120 (ANILLNVTVSVVFAGLGIFLA). Positions 74 and 77 each coordinate Na(+).

It belongs to the fluoride channel Fluc/FEX (TC 1.A.43) family.

It is found in the cell inner membrane. The enzyme catalyses fluoride(in) = fluoride(out). Its activity is regulated as follows. Na(+) is not transported, but it plays an essential structural role and its presence is essential for fluoride channel function. Functionally, fluoride-specific ion channel. Important for reducing fluoride concentration in the cell, thus reducing its toxicity. This is Fluoride-specific ion channel FluC from Syntrophotalea carbinolica (strain DSM 2380 / NBRC 103641 / GraBd1) (Pelobacter carbinolicus).